A 319-amino-acid polypeptide reads, in one-letter code: Ribosomal RNA small subunit methyltransferase H (319 aa).

S-adenosyl-L-methionine-binding positions include 37 to 39 (GGH), Asp-56, Leu-90, Asp-104, and Gln-111.

It belongs to the methyltransferase superfamily. RsmH family.

It is found in the cytoplasm. It catalyses the reaction cytidine(1402) in 16S rRNA + S-adenosyl-L-methionine = N(4)-methylcytidine(1402) in 16S rRNA + S-adenosyl-L-homocysteine + H(+). Specifically methylates the N4 position of cytidine in position 1402 (C1402) of 16S rRNA. The protein is Ribosomal RNA small subunit methyltransferase H of Nocardioides sp. (strain ATCC BAA-499 / JS614).